The following is a 346-amino-acid chain: 4-hydroxy-3-methylbut-2-enyl diphosphate reductase (346 aa).

C19 is a binding site for [4Fe-4S] cluster. Positions 48 and 84 each coordinate (2E)-4-hydroxy-3-methylbut-2-enyl diphosphate. Residues H48 and H84 each coordinate dimethylallyl diphosphate. Isopentenyl diphosphate is bound by residues H48 and H84. Residue C106 coordinates [4Fe-4S] cluster. H134 is a (2E)-4-hydroxy-3-methylbut-2-enyl diphosphate binding site. H134 serves as a coordination point for dimethylallyl diphosphate. H134 contributes to the isopentenyl diphosphate binding site. The active-site Proton donor is the E136. T175 lines the (2E)-4-hydroxy-3-methylbut-2-enyl diphosphate pocket. Residue C205 participates in [4Fe-4S] cluster binding. Positions 233, 234, 235, and 278 each coordinate (2E)-4-hydroxy-3-methylbut-2-enyl diphosphate. Dimethylallyl diphosphate contacts are provided by S233, S234, N235, and S278. Isopentenyl diphosphate-binding residues include S233, S234, N235, and S278.

It belongs to the IspH family. It depends on [4Fe-4S] cluster as a cofactor.

It carries out the reaction isopentenyl diphosphate + 2 oxidized [2Fe-2S]-[ferredoxin] + H2O = (2E)-4-hydroxy-3-methylbut-2-enyl diphosphate + 2 reduced [2Fe-2S]-[ferredoxin] + 2 H(+). The catalysed reaction is dimethylallyl diphosphate + 2 oxidized [2Fe-2S]-[ferredoxin] + H2O = (2E)-4-hydroxy-3-methylbut-2-enyl diphosphate + 2 reduced [2Fe-2S]-[ferredoxin] + 2 H(+). The protein operates within isoprenoid biosynthesis; dimethylallyl diphosphate biosynthesis; dimethylallyl diphosphate from (2E)-4-hydroxy-3-methylbutenyl diphosphate: step 1/1. Its pathway is isoprenoid biosynthesis; isopentenyl diphosphate biosynthesis via DXP pathway; isopentenyl diphosphate from 1-deoxy-D-xylulose 5-phosphate: step 6/6. In terms of biological role, catalyzes the conversion of 1-hydroxy-2-methyl-2-(E)-butenyl 4-diphosphate (HMBPP) into a mixture of isopentenyl diphosphate (IPP) and dimethylallyl diphosphate (DMAPP). Acts in the terminal step of the DOXP/MEP pathway for isoprenoid precursor biosynthesis. The chain is 4-hydroxy-3-methylbut-2-enyl diphosphate reductase from Brucella suis biovar 1 (strain 1330).